The chain runs to 663 residues: UvrABC system protein B (663 aa).

Residues 30–414 enclose the Helicase ATP-binding domain; it reads EGIKAGKRHQ…IEHTDKMVEQ (385 aa). ATP is bound at residue 43–50; that stretch reads GATGTGKT. The short motif at 96-119 is the Beta-hairpin element; the sequence is YYDYYQPEAYVPSTDTFIEKDASI. Positions 434-600 constitute a Helicase C-terminal domain; the sequence is QIDDLLSEIQ…TINKKIHDLI (167 aa). Residues 627–662 form the UVR domain; that stretch reads QKTIDNIEKEMKQAAKDLDFEKATELRDMLFELKAE.

This sequence belongs to the UvrB family. As to quaternary structure, forms a heterotetramer with UvrA during the search for lesions. Interacts with UvrC in an incision complex.

It localises to the cytoplasm. The UvrABC repair system catalyzes the recognition and processing of DNA lesions. A damage recognition complex composed of 2 UvrA and 2 UvrB subunits scans DNA for abnormalities. Upon binding of the UvrA(2)B(2) complex to a putative damaged site, the DNA wraps around one UvrB monomer. DNA wrap is dependent on ATP binding by UvrB and probably causes local melting of the DNA helix, facilitating insertion of UvrB beta-hairpin between the DNA strands. Then UvrB probes one DNA strand for the presence of a lesion. If a lesion is found the UvrA subunits dissociate and the UvrB-DNA preincision complex is formed. This complex is subsequently bound by UvrC and the second UvrB is released. If no lesion is found, the DNA wraps around the other UvrB subunit that will check the other stand for damage. The sequence is that of UvrABC system protein B from Staphylococcus aureus (strain MSSA476).